A 171-amino-acid polypeptide reads, in one-letter code: Photosystem I assembly protein Ycf3 (171 aa).

TPR repeat units lie at residues 35-68 (AFTY…EIDP), 72-105 (SYIL…NPSL), and 120-153 (GEQA…APNN).

Belongs to the Ycf3 family.

The protein localises to the plastid. It localises to the chloroplast thylakoid membrane. In terms of biological role, essential for the assembly of the photosystem I (PSI) complex. May act as a chaperone-like factor to guide the assembly of the PSI subunits. This is Photosystem I assembly protein Ycf3 from Psilotum nudum (Whisk fern).